A 585-amino-acid chain; its full sequence is Glutamate decarboxylase (585 aa).

Polar residues predominate over residues 35 to 56; that stretch reads KSAVQSGHQGSNNMRDTSSQGM. The disordered stretch occupies residues 35 to 60; sequence KSAVQSGHQGSNNMRDTSSQGMANKY. Lys318 bears the N6-(pyridoxal phosphate)lysine mark.

This sequence belongs to the group II decarboxylase family. Requires pyridoxal 5'-phosphate as cofactor.

The catalysed reaction is L-glutamate + H(+) = 4-aminobutanoate + CO2. In Saccharomyces cerevisiae (strain ATCC 204508 / S288c) (Baker's yeast), this protein is Glutamate decarboxylase (GAD1).